We begin with the raw amino-acid sequence, 94 residues long: Co-chaperonin GroES (94 aa).

The protein belongs to the GroES chaperonin family. As to quaternary structure, heptamer of 7 subunits arranged in a ring. Interacts with the chaperonin GroEL.

The protein resides in the cytoplasm. In terms of biological role, together with the chaperonin GroEL, plays an essential role in assisting protein folding. The GroEL-GroES system forms a nano-cage that allows encapsulation of the non-native substrate proteins and provides a physical environment optimized to promote and accelerate protein folding. GroES binds to the apical surface of the GroEL ring, thereby capping the opening of the GroEL channel. This Clostridioides difficile (strain 630) (Peptoclostridium difficile) protein is Co-chaperonin GroES.